The sequence spans 255 residues: MSSIGTGYDLSASTFSPDGRVFQVEYAMKAVENSSTAIGIRCKDGVVFGVEKLVLSKLYEEGSNKRLFNVDRHVGMAVAGLLADARSLADIAREEASNFRSNFGYNIPLKHLADRVAMYVHAYTLYSAVRPFGCSFMLGSYSVNDGAQLYMIDPSGVSYGYWGCAIGKARQAAKTEIEKLQMKEMTCRDVVKEVAKIIYIVHDEVKDKAFELELSWVGEITNGRHEIVPKDVREEAEKYAKESLKEEDESDDDNM.

The residue at position 2 (S2) is an N-acetylserine. An N6-acetyllysine mark is found at K57, K206, and K230. 2 positions are modified to phosphoserine: S243 and S250.

Belongs to the peptidase T1A family. The 26S proteasome consists of a 20S proteasome core and two 19S regulatory subunits. The 20S proteasome core is a barrel-shaped complex made of 28 subunits that are arranged in four stacked rings. The two outer rings are each formed by seven alpha subunits, and the two inner rings are formed by seven beta subunits. The proteolytic activity is exerted by three beta-subunits PSMB5, PSMB6 and PSMB7. Interacts with AURKB. Interacts with CDKN1A. Interacts with MDM2 and RB1. Interacts with the C-terminus of TBXA2R isoform 2. Interacts with DNAJB2.

The protein resides in the cytoplasm. The protein localises to the nucleus. Its function is as follows. Component of the 20S core proteasome complex involved in the proteolytic degradation of most intracellular proteins. This complex plays numerous essential roles within the cell by associating with different regulatory particles. Associated with two 19S regulatory particles, forms the 26S proteasome and thus participates in the ATP-dependent degradation of ubiquitinated proteins. The 26S proteasome plays a key role in the maintenance of protein homeostasis by removing misfolded or damaged proteins that could impair cellular functions, and by removing proteins whose functions are no longer required. Associated with the PA200 or PA28, the 20S proteasome mediates ubiquitin-independent protein degradation. This type of proteolysis is required in several pathways including spermatogenesis (20S-PA200 complex) or generation of a subset of MHC class I-presented antigenic peptides (20S-PA28 complex). Binds to the C-terminus of CDKN1A and thereby mediates its degradation. Negatively regulates the membrane trafficking of the cell-surface thromboxane A2 receptor (TBXA2R) isoform 2. The protein is Proteasome subunit alpha type-3 (PSMA3) of Bos taurus (Bovine).